Reading from the N-terminus, the 985-residue chain is Regulator of telomere elongation helicase 1 homolog (985 aa).

Residues 7–303 form the Helicase ATP-binding domain; that stretch reads AGIPVHFPFE…QDMGGDEPKD (297 aa). Residue 42–49 coordinates ATP; sequence SPTGTGKT. Residues Cys-146, Cys-164, Cys-173, and Cys-209 each contribute to the [4Fe-4S] cluster site. The short motif at 252 to 255 is the DEAH box element; sequence DEAH. The tract at residues 858 to 884 is disordered; the sequence is GSSGMVKIHKRERSSPTQPESSSQVSK. Positions 872–882 are enriched in polar residues; the sequence is SPTQPESSSQV. The residue at position 874 (Thr-874) is a Phosphothreonine.

The protein belongs to the helicase family. RAD3/XPD subfamily.

The protein localises to the nucleus. The enzyme catalyses ATP + H2O = ADP + phosphate + H(+). In terms of biological role, a probable ATP-dependent DNA helicase implicated in DNA repair and the maintenance of genomic stability. Acts as an anti-recombinase to counteract toxic recombination and limit crossover during meiosis. Regulates meiotic recombination and crossover homeostasis by physically dissociating strand invasion events and thereby promotes noncrossover repair by meiotic synthesis dependent strand annealing (SDSA) as well as disassembly of D loop recombination intermediates. This chain is Regulator of telomere elongation helicase 1 homolog, found in Drosophila yakuba (Fruit fly).